A 147-amino-acid polypeptide reads, in one-letter code: Small ribosomal subunit protein uS12 (147 aa).

It belongs to the universal ribosomal protein uS12 family. In terms of assembly, part of the 30S ribosomal subunit.

With S4 and S5 plays an important role in translational accuracy. Located at the interface of the 30S and 50S subunits. The polypeptide is Small ribosomal subunit protein uS12 (Staphylothermus marinus (strain ATCC 43588 / DSM 3639 / JCM 9404 / F1)).